The sequence spans 174 residues: NADH-quinone oxidoreductase subunit I (174 aa).

4Fe-4S ferredoxin-type domains lie at 44-74 (LNRY…VEGD) and 90-119 (RVYQ…MTND). [4Fe-4S] cluster-binding residues include Cys54, Cys57, Cys60, Cys64, Cys99, Cys102, Cys105, and Cys109.

Belongs to the complex I 23 kDa subunit family. NDH-1 is composed of 14 different subunits. Subunits NuoA, H, J, K, L, M, N constitute the membrane sector of the complex. The cofactor is [4Fe-4S] cluster.

Its subcellular location is the cell membrane. It catalyses the reaction a quinone + NADH + 5 H(+)(in) = a quinol + NAD(+) + 4 H(+)(out). NDH-1 shuttles electrons from NADH, via FMN and iron-sulfur (Fe-S) centers, to quinones in the respiratory chain. The immediate electron acceptor for the enzyme in this species is believed to be menaquinone. Couples the redox reaction to proton translocation (for every two electrons transferred, four hydrogen ions are translocated across the cytoplasmic membrane), and thus conserves the redox energy in a proton gradient. The sequence is that of NADH-quinone oxidoreductase subunit I from Mycobacterium sp. (strain JLS).